Here is a 553-residue protein sequence, read N- to C-terminus: Hydroxylamine reductase (553 aa).

Positions 3, 6, 18, and 25 each coordinate [2Fe-2S] cluster. Residues H252, E276, C320, C408, C436, C461, E495, and K497 each coordinate hybrid [4Fe-2O-2S] cluster. C408 carries the cysteine persulfide modification.

The protein belongs to the HCP family. Requires [2Fe-2S] cluster as cofactor. The cofactor is hybrid [4Fe-2O-2S] cluster.

It localises to the cytoplasm. The enzyme catalyses A + NH4(+) + H2O = hydroxylamine + AH2 + H(+). Catalyzes the reduction of hydroxylamine to form NH(3) and H(2)O. This chain is Hydroxylamine reductase, found in Photobacterium phosphoreum.